The primary structure comprises 443 residues: Xaa-Pro dipeptidase (443 aa).

Positions 246, 257, 339, 384, and 423 each coordinate Mn(2+).

Belongs to the peptidase M24B family. Bacterial-type prolidase subfamily. It depends on Mn(2+) as a cofactor.

It carries out the reaction Xaa-L-Pro dipeptide + H2O = an L-alpha-amino acid + L-proline. Splits dipeptides with a prolyl residue in the C-terminal position. The sequence is that of Xaa-Pro dipeptidase from Escherichia coli O81 (strain ED1a).